The following is a 707-amino-acid chain: Caprin-1 (707 aa).

Low complexity-rich tracts occupy residues 1–15 (MPSA…SKSS) and 22–43 (GSSG…PATG). The tract at residues 1 to 48 (MPSATSHSGSGSKSSGPPPPSGSSGSEAAAGAAAPASQHPATGTGAVQ) is disordered. Proline 2 carries the N-acetylproline modification. Residue serine 10 is modified to Phosphoserine. A coiled-coil region spans residues 58 to 92 (VIDKKLRNLEKKKGKLDDYQERMNKGERLNQDQLD). Serine 113 is modified (phosphoserine). Residues 123-151 (KTIKKTARREQLMREEAEQKRLKTVLELQ) adopt a coiled-coil conformation. Residue arginine 163 is modified to Omega-N-methylarginine. Residues 325–335 (LQQQPQAASPS) are compositionally biased toward low complexity. Residues 325-347 (LQQQPQAASPSVPEPHSLTPVAQ) form a disordered region. Residues serine 333 and serine 341 each carry the phosphoserine modification. The G3BP1-binding stretch occupies residues 358 to 379 (QDLMAQMQGPYNFIQDSMLDFE). 3 disordered regions span residues 412 to 496 (ESRL…AGTS), 526 to 558 (PANE…EQTE), and 570 to 707 (TYHG…QQVN). Polar residues predominate over residues 431–452 (PLVSSTSEGYTASQPLYQPSHA). The span at 453–462 (TEQRPQKEPM) shows a compositional bias: basic and acidic residues. The segment covering 465–474 (IQATISLNTD) has biased composition (polar residues). Residues 475-489 (QTTASSSLPAASQPQ) show a composition bias toward low complexity. Composition is skewed to polar residues over residues 533–552 (LKQQ…SQPH) and 572–603 (HGSQ…QPYY). At tyrosine 623 the chain carries Phosphotyrosine. Arginine 624 and arginine 631 each carry omega-N-methylarginine. Phosphotyrosine occurs at positions 634 and 637. Position 638 is an omega-N-methylarginine (arginine 638). The segment covering 640–655 (SFSNTPNSGYSQSQFT) has biased composition (polar residues). O-linked (GlcNAc) serine glycans are attached at residues serine 642 and serine 647. 4 positions are modified to phosphotyrosine: tyrosine 649, tyrosine 660, tyrosine 663, and tyrosine 668. 2 stretches are compositionally biased toward low complexity: residues 674–684 (RGSGQSGPRGA) and 695–707 (NRGM…QQVN). Arginine 696 is subject to Asymmetric dimethylarginine; alternate. Arginine 696 bears the Omega-N-methylarginine; alternate mark.

It belongs to the caprin family. In terms of assembly, may form homomultimers. Interacts with G3BP1; interaction is direct and promotes stress granule formation. Interacts with G3BP2; interaction is direct and promotes stress granule formation. Interacts with PQBP1. Interacts with DDX3X. Interacts (when phosphorylated by EPHA4) with FMR1; interaction with FMR1 promotes formation of a membraneless compartment. Post-translationally, tyrosine phosphorylation by EPHA4 promotes interaction with FMR1 and liquid-liquid phase separation (LLPS) for the formation of a membraneless compartment that concentrates mRNAs with associated regulatory factors. O-glycosylated (O-GlcNAcylated), in a cell cycle-dependent manner. O-glycosylation by OGT inhibit ability to undergo liquid-liquid phase separation (LLPS). Highest expression in thymus, spleen and brain (at protein level). Lower levels in kidney, muscle and liver (at protein level).

The protein resides in the cytoplasm. The protein localises to the cytoplasmic ribonucleoprotein granule. Its subcellular location is the cytosol. It is found in the cell projection. It localises to the dendrite. The protein resides in the lamellipodium. With respect to regulation, ability to mediate liquid-liquid phase separation is regulated by ATP: moderate concentrations of ATP enhance phase separation, whereas high concentrations of ATP lead to inhibition of phase separation. Its function is as follows. mRNA-binding protein that acts as a regulator of mRNAs transport, translation and/or stability, and which is involved in neurogenesis, synaptic plasticity in neurons and cell proliferation and migration in multiple cell types. Plays an essential role in cytoplasmic stress granule formation. Acts as an mRNA regulator by mediating formation of some phase-separated membraneless compartment: undergoes liquid-liquid phase separation upon binding to target mRNAs, leading to assemble mRNAs into cytoplasmic ribonucleoprotein granules that concentrate mRNAs with associated regulatory factors. Undergoes liquid-liquid phase separation following phosphorylation and interaction with FMR1, promoting formation of cytoplasmic ribonucleoprotein granules that concentrate mRNAs with factors that inhibit translation and mediate deadenylation of target mRNAs. In these cytoplasmic ribonucleoprotein granules, CAPRIN1 mediates recruitment of CNOT7 deadenylase, leading to mRNA deadenylation and degradation. Binds directly and selectively to MYC and CCND2 mRNAs. In neuronal cells, directly binds to several mRNAs associated with RNA granules, including BDNF, CAMK2A, CREB1, MAP2, NTRK2 mRNAs, as well as to GRIN1 and KPNB1 mRNAs, but not to rRNAs. This Mus musculus (Mouse) protein is Caprin-1 (Caprin1).